We begin with the raw amino-acid sequence, 168 residues long: Photosystem I assembly protein Ycf3 (168 aa).

TPR repeat units lie at residues 35 to 68 (AFAY…EIDP), 72 to 105 (SYIL…NPFL), and 120 to 153 (GEQA…TPGN).

It belongs to the Ycf3 family.

The protein resides in the plastid. The protein localises to the chloroplast thylakoid membrane. Essential for the assembly of the photosystem I (PSI) complex. May act as a chaperone-like factor to guide the assembly of the PSI subunits. This Morus indica (Mulberry) protein is Photosystem I assembly protein Ycf3.